A 501-amino-acid polypeptide reads, in one-letter code: Histidine--tRNA ligase (501 aa).

The protein belongs to the class-II aminoacyl-tRNA synthetase family. Homodimer.

It is found in the cytoplasm. It catalyses the reaction tRNA(His) + L-histidine + ATP = L-histidyl-tRNA(His) + AMP + diphosphate + H(+). This chain is Histidine--tRNA ligase, found in Methylocella silvestris (strain DSM 15510 / CIP 108128 / LMG 27833 / NCIMB 13906 / BL2).